Here is a 54-residue protein sequence, read N- to C-terminus: 2-aminomuconate deaminase (54 aa).

As to quaternary structure, homohexamer.

The enzyme catalyses (2Z,4E)-2-aminomuconate + H2O = (3E)-2-oxohex-3-enedioate + NH4(+). Its pathway is xenobiotic degradation; nitrobenzene degradation. In terms of biological role, converts 2-aminomuconate to 4-oxalocrotonate, an intermediate step in the biodegradation of nitrobenzene. The polypeptide is 2-aminomuconate deaminase (Ectopseudomonas oleovorans (Pseudomonas oleovorans)).